Consider the following 159-residue polypeptide: Succinate dehydrogenase [ubiquinone] cytochrome b small subunit, mitochondrial (159 aa).

Residues 1-56 (MAVLLKLGVLCSGQGARALSLRSRAVRPAFVSAFLQDQPTPGWRGTQHIHLSPSHQ) constitute a mitochondrion transit peptide. Topologically, residues 57–63 (SGSKAAS) are mitochondrial matrix. A helical transmembrane segment spans residues 64–85 (LHWTSERVVSVLLLGLIPAGYL). Residues 86–90 (NPCSV) are Mitochondrial intermembrane-facing. The helical transmembrane segment at 91 to 111 (VDYSLAAALTLHSHWGIGQVV) threads the bilayer. Histidine 102 is a heme b binding site. Topologically, residues 112–120 (TDYVHGDAL) are mitochondrial matrix. Position 114 (tyrosine 114) interacts with a ubiquinone. A helical transmembrane segment spans residues 121-142 (QKATKAGLLAVSALTFAGLCYF). The Mitochondrial intermembrane segment spans residues 143-159 (NYHDVGICRAVAMLWKL).

It belongs to the CybS family. Component of complex II composed of four subunits: the flavoprotein (FP) SDHA, iron-sulfur protein (IP) SDHB, and a cytochrome b560 composed of SDHC and SDHD.

The protein localises to the mitochondrion inner membrane. The protein operates within carbohydrate metabolism; tricarboxylic acid cycle. Membrane-anchoring subunit of succinate dehydrogenase (SDH) that is involved in complex II of the mitochondrial electron transport chain and is responsible for transferring electrons from succinate to ubiquinone (coenzyme Q). SDH also oxidizes malate to the non-canonical enol form of oxaloacetate, enol-oxaloacetate. Enol-oxaloacetate, which is a potent inhibitor of the succinate dehydrogenase activity, is further isomerized into keto-oxaloacetate. The chain is Succinate dehydrogenase [ubiquinone] cytochrome b small subunit, mitochondrial (Sdhd) from Rattus norvegicus (Rat).